Reading from the N-terminus, the 136-residue chain is MGKDTIADIITSIRNADMNRKGTVRIASTNITENVVKILLREGFIENARKLVENKNKKEFLVLTLRHRRNRKGPYRPILNLKRISRPGLRIYFNYRRIPRILDGMGIVILSTSRGIMTDRAARLERIGGEILCYIW.

This sequence belongs to the universal ribosomal protein uS8 family. Part of the 30S ribosomal subunit.

It localises to the plastid. Its subcellular location is the chloroplast. One of the primary rRNA binding proteins, it binds directly to 16S rRNA central domain where it helps coordinate assembly of the platform of the 30S subunit. In Citrus sinensis (Sweet orange), this protein is Small ribosomal subunit protein uS8c (rps8).